Reading from the N-terminus, the 156-residue chain is Transcription factor MafF (156 aa).

The interval 51-76 is basic motif; it reads RLKQRRRTLKNRGYAASCRVKRVCQK. The region spanning 51-114 is the bZIP domain; that stretch reads RLKQRRRTLK…DALRGKCEAL (64 aa). Residues 79-93 are leucine-zipper; sequence LQKQKSELEREVDKL.

The protein belongs to the bZIP family. Maf subfamily. Monomer and homo- or heterodimer. Interacts with MIP. Forms high affinity heterodimers with members of the CNC-bZIP family such as NFE2L1/NRF1. In terms of tissue distribution, highly expressed in the lung, lower expression in the brain, thymus, liver, spleen, intestine, kidney, heart, muscle, and ovary. Not significantly expressed in hematopoietic cells.

It localises to the nucleus. Since they lack a putative transactivation domain, the small Mafs behave as transcriptional repressors when they dimerize among themselves. However, they seem to serve as transcriptional activators by dimerizing with other (usually larger) basic-zipper proteins, such as NFE2L1/NRF1, and recruiting them to specific DNA-binding sites. Interacts with the upstream promoter region of the oxytocin receptor gene. May be a transcriptional enhancer in the up-regulation of the oxytocin receptor gene at parturition. The sequence is that of Transcription factor MafF (Maff) from Mus musculus (Mouse).